Reading from the N-terminus, the 142-residue chain is E1B protein, small T-antigen (142 aa).

The protein belongs to the adenoviridae E1B 19 kDa protein family.

It is found in the host cell membrane. Its subcellular location is the host nucleus envelope. The protein localises to the host nucleus lamina. Its function is as follows. Putative adenovirus Bcl-2 homolog that inhibits apoptosis induced by TNF or FAS pathways, as well as p53-mediated apoptosis. Without E1B 19K function, virus production is compromised because of premature death of host cell. Interacts with Bax protein in cell lysates. In Homo sapiens (Human), this protein is E1B protein, small T-antigen.